Here is a 259-residue protein sequence, read N- to C-terminus: Sugar fermentation stimulation protein homolog (259 aa).

Belongs to the SfsA family.

The protein is Sugar fermentation stimulation protein homolog of Chloroflexus aurantiacus (strain ATCC 29364 / DSM 637 / Y-400-fl).